A 365-amino-acid chain; its full sequence is MEPELTVPPLFSPIRQAIHPKHADIDVQTAAWAETFRIGSEELRGKLVTQDIGTFSARILPEGREEVVSLLADFILWLFGVDDGHCEEGELGHRPGDLAGLLHRLIRVAQNPEAPMMQDDPLAAGLRDLRMRVDRFGTAGQTARWVDALREYFFSVVWEAAHRRAGTVPDLNDYTLMRLYDGATSVVLPMLEMGHGYELQPYERDRTAVRAVAEMASFIITWDNDIFSYHKERRGSGYYLNALRVLEQERGLTPAQALDAAISQRDRVMCLFTTVSEQLAEQGSPQLRQYLHSLRCFIRGAQDWGISSVRYTTPDDPANMPSVFTDVPTDDSTEPLDIPAVSWWWDLLAEDARSVRRQVPAQRSA.

2 residues coordinate Mg(2+): Asp82 and Glu87. Residues 82-87 carry the DDXXXE motif motif; it reads DDGHCE. Residue Arg178 coordinates substrate. Residues Asn224 and Ser228 each coordinate Mg(2+). Lys231 is a binding site for substrate. Glu232 serves as a coordination point for Mg(2+). 310–311 is a substrate binding site; sequence RY.

It belongs to the terpene synthase family. As to quaternary structure, monomer. Mg(2+) is required as a cofactor.

It catalyses the reaction (2E,6E)-farnesyl diphosphate = selina-4(15),7(11)-diene + diphosphate. It participates in secondary metabolite biosynthesis; terpenoid biosynthesis. Catalyzes the conversion of (2E,6E)-farnesyl diphosphate (FPP) to yield the bicyclic sesquiterpene selina-4(15),7(11)-diene via a 1,10-cyclization, which requires the abstraction of the pyrophosphate from FPP leading to a (E,E)-germacradienyl cation. The only accepted substrate is (2E,6E)-farnesyl diphosphate (FPP). This is Selina-4(15),7(11)-diene synthase ((2E,6E)-farnesyl diphosphate cyclizing) from Streptomyces pristinaespiralis (strain ATCC 25486 / DSM 40338 / CBS 914.69 / JCM 4507 / KCC S-0507 / NBRC 13074 / NRRL 2958 / 5647).